We begin with the raw amino-acid sequence, 86 residues long: MDRNQRKVYQGRVVSDKMDKTITVLVETYKKDRLYGKRVKYSKKFKAHDEQNTAKVGDIVRIMETRPLSKDKRFRLVEIVEEAIII.

The protein belongs to the universal ribosomal protein uS17 family. Part of the 30S ribosomal subunit.

Functionally, one of the primary rRNA binding proteins, it binds specifically to the 5'-end of 16S ribosomal RNA. The chain is Small ribosomal subunit protein uS17 from Shouchella clausii (strain KSM-K16) (Alkalihalobacillus clausii).